Here is a 320-residue protein sequence, read N- to C-terminus: Cytochrome f (320 aa).

The N-terminal stretch at 1-35 is a signal peptide; sequence MQNRNTFSWVKEQMTRFISVSIMIYVITRTSISNA. Heme contacts are provided by Tyr-36, Cys-56, Cys-59, and His-60. Residues 286–306 traverse the membrane as a helical segment; that stretch reads VQGLLFFLASVILAQIFLVLK.

Belongs to the cytochrome f family. The 4 large subunits of the cytochrome b6-f complex are cytochrome b6, subunit IV (17 kDa polypeptide, petD), cytochrome f and the Rieske protein, while the 4 small subunits are PetG, PetL, PetM and PetN. The complex functions as a dimer. Heme serves as cofactor.

It localises to the plastid. Its subcellular location is the chloroplast thylakoid membrane. Component of the cytochrome b6-f complex, which mediates electron transfer between photosystem II (PSII) and photosystem I (PSI), cyclic electron flow around PSI, and state transitions. The protein is Cytochrome f of Liriodendron tulipifera (Tuliptree).